The following is a 541-amino-acid chain: Carboxypeptidase Y homolog A (541 aa).

Positions 1–17 (MKVATSALLIGAAAAQQ) are cleaved as a signal peptide. The propeptide occupies 18 to 125 (QQILKFPDSF…KLEQYSLRAK (108 aa)). 5 disulfide bridges follow: Cys-179–Cys-418, Cys-313–Cys-327, Cys-337–Cys-360, Cys-344–Cys-353, and Cys-382–Cys-388. Asn-210 is a glycosylation site (N-linked (GlcNAc...) asparagine). Residue Ser-266 is part of the active site. Residue Asp-457 is part of the active site. N-linked (GlcNAc...) asparagine glycosylation is present at Asn-505. Residue His-516 is part of the active site.

It belongs to the peptidase S10 family.

Its subcellular location is the vacuole. It carries out the reaction Release of a C-terminal amino acid with broad specificity.. Its function is as follows. Vacuolar carboxypeptidase involved in degradation of small peptides. Digests preferentially peptides containing an aliphatic or hydrophobic residue in P1' position, as well as methionine, leucine or phenylalanine in P1 position of ester substrate. The protein is Carboxypeptidase Y homolog A (cpyA) of Pyrenophora tritici-repentis (strain Pt-1C-BFP) (Wheat tan spot fungus).